Reading from the N-terminus, the 1140-residue chain is DNA damage-binding protein 1 (1140 aa).

This sequence belongs to the DDB1 family. As to quaternary structure, component of the UV-DDB complex which includes DDB1 and DDB2; the heterodimer dimerizes to give rise to a heterotetramer when bound to damaged DNA. The UV-DDB complex interacts with monoubiquitinated histone H2A and binds to XPC via the DDB2 subunit. Component of numerous DCX (DDB1-CUL4-X-box) E3 ubiquitin-protein ligase complexes which consist of a core of DDB1, CUL4A or CUL4B and RBX1. DDB1 may recruit specific substrate targeting subunits to the DCX complex. These substrate targeting subunits are generally known as DCAF (DDB1- and CUL4-associated factor) or CDW (CUL4-DDB1-associated WD40-repeat) proteins. Interacts with Fbw5 and gig. May interact with ohgt.

The protein resides in the cytoplasm. Its subcellular location is the nucleus. It participates in protein modification; protein ubiquitination. In terms of biological role, protein, which is both involved in DNA repair and protein ubiquitination, as part of the UV-DDB complex and DCX (DDB1-CUL4-X-box) complexes, respectively. Core component of the UV-DDB complex (UV-damaged DNA-binding protein complex), a complex that recognizes UV-induced DNA damage and recruit proteins of the nucleotide excision repair pathway (the NER pathway) to initiate DNA repair. The UV-DDB complex preferentially binds to cyclobutane pyrimidine dimers (CPD), 6-4 photoproducts (6-4 PP), apurinic sites and short mismatches. Also functions as a component of numerous distinct DCX (DDB1-CUL4-X-box) E3 ubiquitin-protein ligase complexes which mediate the ubiquitination and subsequent proteasomal degradation of target proteins. The functional specificity of the DCX E3 ubiquitin-protein ligase complex is determined by the variable substrate recognition component recruited by DDB1. Required for degradation of gig. Required for genomic stability in the face of endogenous DNA lesions and for the response to MMS-induced DNA damage. Required for normal wing development. The polypeptide is DNA damage-binding protein 1 (pic) (Drosophila melanogaster (Fruit fly)).